A 198-amino-acid polypeptide reads, in one-letter code: MVLATALGLRFDGGVVLAADRRVSYNGFILSKSARKVFLINERVGVSTAGLPGDFQELVDVLKYNITMYELENEKAATPTNVAKLLSILLYQGRFSGIYYAELVVGGIDNSGPKIFVLDPAGGLMEENFSAVGSGAQIATGILERFFKEGMSEKEAVELAERAMREAISRDALSGDGIDLLIITSKGSRMEFIPVRTA.

Residues 1-4 constitute a propeptide, removed in mature form; by autocatalysis; it reads MVLA. Catalysis depends on Thr5, which acts as the Nucleophile.

It belongs to the peptidase T1B family. The 20S proteasome core is composed of 14 alpha and 14 beta subunits that assemble into four stacked heptameric rings, resulting in a barrel-shaped structure. The two inner rings, each composed of seven catalytic beta subunits, are sandwiched by two outer rings, each composed of seven alpha subunits. The catalytic chamber with the active sites is on the inside of the barrel. Has a gated structure, the ends of the cylinder being occluded by the N-termini of the alpha-subunits. Is capped at one or both ends by the proteasome regulatory ATPase, PAN.

The protein localises to the cytoplasm. It carries out the reaction Cleavage of peptide bonds with very broad specificity.. Its activity is regulated as follows. The formation of the proteasomal ATPase PAN-20S proteasome complex, via the docking of the C-termini of PAN into the intersubunit pockets in the alpha-rings, triggers opening of the gate for substrate entry. Interconversion between the open-gate and close-gate conformations leads to a dynamic regulation of the 20S proteasome proteolysis activity. Functionally, component of the proteasome core, a large protease complex with broad specificity involved in protein degradation. The protein is Proteasome subunit beta 2 of Korarchaeum cryptofilum (strain OPF8).